Reading from the N-terminus, the 421-residue chain is Cytochrome c biogenesis protein Ccs1 (421 aa).

3 helical membrane-spanning segments follow: residues 12 to 32 (LRFA…GTVI), 71 to 91 (TWWF…CTLL), and 157 to 177 (IAPI…IIGS).

The protein belongs to the Ccs1/CcsB family. As to quaternary structure, may interact with CcsA.

It localises to the plastid. Its subcellular location is the chloroplast thylakoid membrane. Functionally, required during biogenesis of c-type cytochromes (cytochrome c6 and cytochrome f) at the step of heme attachment. The sequence is that of Cytochrome c biogenesis protein Ccs1 from Thalassiosira pseudonana (Marine diatom).